A 61-amino-acid polypeptide reads, in one-letter code: Small ribosomal subunit protein uS14B (61 aa).

Residues C24, C27, C40, and C43 each coordinate Zn(2+).

It belongs to the universal ribosomal protein uS14 family. Zinc-binding uS14 subfamily. As to quaternary structure, part of the 30S ribosomal subunit. Contacts proteins S3 and S10. It depends on Zn(2+) as a cofactor.

In terms of biological role, binds 16S rRNA, required for the assembly of 30S particles and may also be responsible for determining the conformation of the 16S rRNA at the A site. This chain is Small ribosomal subunit protein uS14B, found in Listeria welshimeri serovar 6b (strain ATCC 35897 / DSM 20650 / CCUG 15529 / CIP 8149 / NCTC 11857 / SLCC 5334 / V8).